Reading from the N-terminus, the 949-residue chain is Leucine--tRNA ligase (949 aa).

A 'HIGH' region motif is present at residues 68 to 79; sequence PYPSGEGLHVGH. The tract at residues 540–562 is disordered; that stretch reads VPDYSPVSFDPDDAGSEPSPPLG. A 'KMSKS' region motif is present at residues 722-726; sequence KIGKS. Lys725 is an ATP binding site.

This sequence belongs to the class-I aminoacyl-tRNA synthetase family.

It is found in the cytoplasm. It carries out the reaction tRNA(Leu) + L-leucine + ATP = L-leucyl-tRNA(Leu) + AMP + diphosphate. The protein is Leucine--tRNA ligase of Mycolicibacterium gilvum (strain PYR-GCK) (Mycobacterium gilvum (strain PYR-GCK)).